A 284-amino-acid chain; its full sequence is N-methyltransferase sirN (284 aa).

This sequence belongs to the methyltransferase superfamily. LaeA methyltransferase family.

The protein operates within mycotoxin biosynthesis. N-methyltransferase; part of the gene cluster that mediates the biosynthesis of sirodesmin PL, an epipolythiodioxopiperazine (ETP) characterized by a disulfide bridged cyclic dipeptide and that acts as a phytotoxin which is involved in the blackleg didease of canola. SirD catalyzes the O-prenylation of L-tyrosine (L-Tyr) in the presence of dimethylallyl diphosphate (DMAPP) to yield 4-O-dimethylallyl-L-Tyr, and therefore represents probably the first pathway-specific enzyme in the biosynthesis of sirodesmin PL. 4-O-dimethylallyl-L-Tyr, then undergoes condensation with L-Ser in a reaction catalyzed by the non-ribosomal peptide synthase sirP to form the diketopiperazine (DKP) backbone. Further bishydroxylation of the DKP performed by the cytochrome P450 monooxygenase sirC leads to the production of the intermediate phomamide. This step is essential to form the reactive thiol group required for toxicity of sirodesmin PL. The next steps of sirodesmin biosynthesis are not well understood yet but some predictions could be made from intermediate compounds identification. Phomamide is converted into phomalizarine via oxidation, probably by sirT. Further oxidation, methylation (by sirM or sirN) and reduction steps convert phomalizarine to deacetyl sirodesmin. Finally, acetyltransferase sirH probably acetylates deacetyl sirodesmin to produce sirodesmin PL. This is N-methyltransferase sirN from Leptosphaeria maculans (Blackleg fungus).